The chain runs to 135 residues: Interleukin-4 (135 aa).

Residues 1–24 (MGLTSQLIPALVCLLVCTSHFVHG) form the signal peptide. 3 cysteine pairs are disulfide-bonded: C27-C135, C48-C85, and C70-C105. N-linked (GlcNAc...) asparagine glycans are attached at residues N62 and N96.

The protein belongs to the IL-4/IL-13 family.

The protein resides in the secreted. Functionally, participates in at least several B-cell activation processes as well as of other cell types. It is a costimulator of DNA-synthesis. It induces the expression of class II MHC molecules on resting B-cells. It enhances both secretion and cell surface expression of IgE and IgG1. It also regulates the expression of the low affinity Fc receptor for IgE (CD23) on both lymphocytes and monocytes. Positively regulates IL31RA expression in macrophages. Stimulates autophagy in dendritic cells by interfering with mTORC1 signaling and through the induction of RUFY4. This Capra hircus (Goat) protein is Interleukin-4 (IL4).